The primary structure comprises 206 residues: NADH-quinone oxidoreductase subunit C (206 aa).

This sequence belongs to the complex I 30 kDa subunit family. As to quaternary structure, NDH-1 is composed of 14 different subunits. Subunits NuoB, C, D, E, F, and G constitute the peripheral sector of the complex.

The protein localises to the cell inner membrane. The enzyme catalyses a quinone + NADH + 5 H(+)(in) = a quinol + NAD(+) + 4 H(+)(out). In terms of biological role, NDH-1 shuttles electrons from NADH, via FMN and iron-sulfur (Fe-S) centers, to quinones in the respiratory chain. The immediate electron acceptor for the enzyme in this species is believed to be ubiquinone. Couples the redox reaction to proton translocation (for every two electrons transferred, four hydrogen ions are translocated across the cytoplasmic membrane), and thus conserves the redox energy in a proton gradient. The polypeptide is NADH-quinone oxidoreductase subunit C (Nitrosomonas europaea (strain ATCC 19718 / CIP 103999 / KCTC 2705 / NBRC 14298)).